We begin with the raw amino-acid sequence, 373 residues long: Transcription factor SPATULA (373 aa).

Positions 1 to 21 (MISQREEREEKKQRVMGDKKL) are enriched in basic and acidic residues. Disordered stretches follow at residues 1–46 (MISQ…PSSS) and 141–210 (VQGN…KRRR). Residues 141–160 (VQGNSSGTRVSSSSVGASGN) are compositionally biased toward low complexity. Positions 161-177 (ETDEYDCESEEGGEAVV) are enriched in acidic residues. The segment covering 182 to 191 (SSKSGPSSRS) has biased composition (low complexity). Residues 197–210 (RAAEVHNLSEKRRR) are compositionally biased toward basic and acidic residues. Residues 197-246 (RAAEVHNLSEKRRRSRINEKMKALQSLIPNSNKTDKASMLDEAIEYLKQL) enclose the bHLH domain.

Homodimer. Interacts with HEC1, HEC2 and HEC3. Binds to RGL2 and RGA. In terms of tissue distribution, expressed in lateral root caps, young leaves, stipules, maturing pith cells of the stem, differentiating vascular cells, shoot apical meristems and flowers.

Its subcellular location is the nucleus. Functionally, transcription factor that plays a role in floral organogenesis. Promotes the growth of carpel margins and of pollen tract tissues derived from them. This is Transcription factor SPATULA (SPT) from Arabidopsis thaliana (Mouse-ear cress).